We begin with the raw amino-acid sequence, 186 residues long: Elongation factor P (186 aa).

Belongs to the elongation factor P family.

It is found in the cytoplasm. It participates in protein biosynthesis; polypeptide chain elongation. In terms of biological role, involved in peptide bond synthesis. Stimulates efficient translation and peptide-bond synthesis on native or reconstituted 70S ribosomes in vitro. Probably functions indirectly by altering the affinity of the ribosome for aminoacyl-tRNA, thus increasing their reactivity as acceptors for peptidyl transferase. This Neisseria gonorrhoeae (strain NCCP11945) protein is Elongation factor P.